The primary structure comprises 286 residues: Bifunctional protein FolD (286 aa).

Residues 165-167 (GRS) and Ser-190 contribute to the NADP(+) site.

Belongs to the tetrahydrofolate dehydrogenase/cyclohydrolase family. Homodimer.

The catalysed reaction is (6R)-5,10-methylene-5,6,7,8-tetrahydrofolate + NADP(+) = (6R)-5,10-methenyltetrahydrofolate + NADPH. The enzyme catalyses (6R)-5,10-methenyltetrahydrofolate + H2O = (6R)-10-formyltetrahydrofolate + H(+). The protein operates within one-carbon metabolism; tetrahydrofolate interconversion. In terms of biological role, catalyzes the oxidation of 5,10-methylenetetrahydrofolate to 5,10-methenyltetrahydrofolate and then the hydrolysis of 5,10-methenyltetrahydrofolate to 10-formyltetrahydrofolate. In Staphylococcus aureus (strain USA300), this protein is Bifunctional protein FolD.